A 132-amino-acid chain; its full sequence is MVNDTISDMLTRIRNANMVKHQIVQIPASKMSLAIAEILKQEGFIGDFETYSENEKKYLLISLKYVGKLRKPVICKIERVSKPGLRVYSNSKKLPRILDNLGIAIISTSKGVMTNLKAKELGIGGEVLCYIW.

This sequence belongs to the universal ribosomal protein uS8 family. Part of the 30S ribosomal subunit.

The protein resides in the plastid. It localises to the chloroplast. One of the primary rRNA binding proteins, it binds directly to 16S rRNA central domain where it helps coordinate assembly of the platform of the 30S subunit. The protein is Small ribosomal subunit protein uS8c (rps8) of Phaeodactylum tricornutum (strain CCAP 1055/1).